Reading from the N-terminus, the 496-residue chain is Probable CtpA-like serine protease (496 aa).

Residues 1–16 (MDDKQHTSSSDDERAE) show a composition bias toward basic and acidic residues. A disordered region spans residues 1 to 27 (MDDKQHTSSSDDERAEIATSNQDQQTN). A compositionally biased stretch (polar residues) spans 18 to 27 (ATSNQDQQTN). The chain crosses the membrane as a helical span at residues 39–59 (FISILIGTILITAVITVVAYI). In terms of domain architecture, PDZ spans 124-206 (TKSFNEGVSG…TEVTLTVQRG (83 aa)). Active-site charge relay system residues include serine 329, aspartate 340, and lysine 354.

Belongs to the peptidase S41A family.

It is found in the cell membrane. The chain is Probable CtpA-like serine protease from Staphylococcus aureus (strain bovine RF122 / ET3-1).